The sequence spans 504 residues: MEEFQVYLELNRSRRHDFLYPLIFREYIYALAHEHGLNKSMIFFENQGYGNKFSSLIVKRLILRMDQQNRLISSANDSNQNPVFGHNNNLYSQMIAVGFAVIVEIPFSLRLISYSQGAEVAKSHNLQSIHSIFPFLEDKFSHLNYVLEALIPHPIHLEILVQALRYWVKDASSLHLLRFSLYEYCNLKSFITPKKSISIFNPRLFLFLYNSHTCEYESIFLFLRNQSSHLRSTSSGVFLERIFFYGKIKYLGEVFYNDFQNNLWLFKDPFIHFIRYQGKSILSSKDTSLLINKWKYYFVDLWQYYFYLWSQSGRVRINQLSKYSLDFLGYLSSVRLNPSVVRSQVLENSFLIDNAVKTLDTRIPIISLIGSLSKAKFCNTLGHPISKPTWADSPDSDIIDRFVRISRNLSHYHSGSSKKKSLYRIKYILRFSCVKTLARKHKSTVRAFLKKLGSEFLEEFFTETEEEHVISLIFPRGFFAMRKVYRGRIWYLDIICINALVNHS.

This sequence belongs to the intron maturase 2 family. MatK subfamily.

The protein localises to the plastid. The protein resides in the chloroplast. Usually encoded in the trnK tRNA gene intron. Probably assists in splicing its own and other chloroplast group II introns. This chain is Maturase K, found in Gossypium barbadense (Sea Island cotton).